Here is a 171-residue protein sequence, read N- to C-terminus: Cytochrome c oxidase subunit 5, mitochondrial (171 aa).

Residues 1 to 27 (MLRTPTVSALVRNVAVRAAKPTMAVRA) constitute a mitochondrion transit peptide. At 28–100 (ASTMPISNPT…ALPPPGEQKK (73 aa)) the chain is on the mitochondrial matrix side. The helical transmembrane segment at 101-123 (VLAYTVAGVFLSFVIFATMRAFA) threads the bilayer. At 124–171 (KPPPATMTKEWQEATNEFLKAQKSDPLTGLTSEGYNGKGHVQSPSASA) the chain is on the mitochondrial intermembrane side. Residues 145–171 (QKSDPLTGLTSEGYNGKGHVQSPSASA) form a disordered region.

This sequence belongs to the cytochrome c oxidase IV family. As to quaternary structure, component of the cytochrome c oxidase (complex IV, CIV), a multisubunit enzyme composed of 11 subunits. The complex is composed of a catalytic core of 3 subunits Cox1, Cox2 and Cox3, encoded in the mitochondrial DNA, and 8 supernumerary subunits Cox4, Cox5a/Cox5, Cox6, Cox7, Cox8, Cox7a/Cox9, Cox6b/Cox12 and Cox6a/Cox13, which are encoded in the nuclear genome. The complex exists as a monomer or a dimer and forms respiratory supercomplexes (SCs) in the inner mitochondrial membrane with NADH-ubiquinone oxidoreductase (complex I, CI) and ubiquinol-cytochrome c oxidoreductase (cytochrome b-c1 complex, complex III, CIII), resulting in various different assemblies (supercomplexes I(1)IV(1), I(1)III(3)IV(2), III(2)IV(1) and III(2)IV(2) as well as larger supercomplexes of compositions like I(1)III(2)IV(5-6)).

Its subcellular location is the mitochondrion inner membrane. It functions in the pathway energy metabolism; oxidative phosphorylation. Functionally, component of the cytochrome c oxidase, the last enzyme in the mitochondrial electron transport chain which drives oxidative phosphorylation. The respiratory chain contains 3 multisubunit complexes succinate dehydrogenase (complex II, CII), ubiquinol-cytochrome c oxidoreductase (cytochrome b-c1 complex, complex III, CIII) and cytochrome c oxidase (complex IV, CIV), that cooperate to transfer electrons derived from NADH and succinate to molecular oxygen, creating an electrochemical gradient over the inner membrane that drives transmembrane transport and the ATP synthase. Cytochrome c oxidase is the component of the respiratory chain that catalyzes the reduction of oxygen to water. Electrons originating from reduced cytochrome c in the intermembrane space (IMS) are transferred via the dinuclear copper A center (CU(A)) of Cox2 and heme A of Cox1 to the active site in Cox1, a binuclear center (BNC) formed by heme A3 and copper B (CU(B)). The BNC reduces molecular oxygen to 2 water molecules using 4 electrons from cytochrome c in the IMS and 4 protons from the mitochondrial matrix. The chain is Cytochrome c oxidase subunit 5, mitochondrial (cya-4) from Neurospora crassa (strain ATCC 24698 / 74-OR23-1A / CBS 708.71 / DSM 1257 / FGSC 987).